Here is a 354-residue protein sequence, read N- to C-terminus: Protein Wnt-11 (354 aa).

A signal peptide spans 1 to 23; sequence MTEYRNFLLLFITSLSVIYPCTG. Residues N32, N39, and N89 are each glycosylated (N-linked (GlcNAc...) asparagine). Cystine bridges form between C129-C137, C139-C156, C209-C223, C211-C218, C283-C314, C299-C309, C329-C344, C331-C341, and C336-C337. S215 carries O-palmitoleoyl serine; by PORCN lipidation. The N-linked (GlcNAc...) asparagine glycan is linked to N300.

The protein belongs to the Wnt family. In terms of processing, palmitoleoylation is required for efficient binding to frizzled receptors. Depalmitoleoylation leads to Wnt signaling pathway inhibition.

The protein localises to the secreted. It is found in the extracellular space. The protein resides in the extracellular matrix. In terms of biological role, ligand for fzd5, a member of the G-protein coupled frizzled receptor family. Plays a role in early eye development, possibly through wnt non-canonical signaling. Promotes eye formation, at least partially, by antagonizing the Wnt/beta-catenin pathway. In addition, promotes coherence of eye field cells, potentially contributing to the coordinated morphogenetic behaviors of cells in the nascent eye field. This chain is Protein Wnt-11 (wnt11), found in Danio rerio (Zebrafish).